The chain runs to 462 residues: Cytochrome b558/566 subunit A (462 aa).

Residues 1-8 (MSLKIKSK) are Cytoplasmic-facing. A helical membrane pass occupies residues 9-26 (ITIGVLLIIFLLSIIFTL). Topologically, residues 27–431 (ENVSLAQTSP…TSTSPVTTIS (405 aa)) are extracellular. Residues asparagine 28, asparagine 65, asparagine 91, asparagine 121, asparagine 144, asparagine 164, asparagine 174, asparagine 183, asparagine 211, asparagine 278, asparagine 279, asparagine 293, asparagine 316, asparagine 339, asparagine 353, and asparagine 376 are each glycosylated (N-linked (GlcNAc...) asparagine). Residues 432–456 (SAIPPVTLYVTIIGVVVALVALVIL) form a helical membrane-spanning segment. Residues 457–462 (YVVFRR) lie on the Cytoplasmic side of the membrane.

The cofactor is heme. In terms of processing, N-glycosylated on at least seven Asn residues by identical hexasaccharide units composed of Man, GlcNAc, Glc and 6-deoxy-6-sulfoglucose residues in the molar ration of 2:2:1:1. Post-translationally, O-glycosylated on probably as many as 35 positions by single Man residues.

Its subcellular location is the cell membrane. Functionally, monoheme cytochrome whose physiological function is not yet clear. The protein is Cytochrome b558/566 subunit A (cbsA) of Sulfolobus acidocaldarius (strain ATCC 33909 / DSM 639 / JCM 8929 / NBRC 15157 / NCIMB 11770).